The following is a 259-amino-acid chain: Gem-associated protein 2 (259 aa).

Belongs to the gemin-2 family. In terms of assembly, forms a stable heteromeric complex with survival of motor neuron protein (SMN), GEMIN3 and GEMIN4. The SMN complex is associated with the spliceosomal snRNAs U1 and U5 in the cytoplasm of oocytes.

The protein resides in the nucleus. It localises to the gem. The protein localises to the cytoplasm. Functionally, the SMN complex catalyzes the assembly of small nuclear ribonucleoproteins (snRNPs), the building blocks of the spliceosome, and thereby plays an important role in the splicing of cellular pre-mRNAs. Most spliceosomal snRNPs contain a common set of Sm proteins SNRPB, SNRPD1, SNRPD2, SNRPD3, SNRPE, SNRPF and SNRPG that assemble in a heptameric protein ring on the Sm site of the small nuclear RNA to form the core snRNP (Sm core). In the cytosol, the Sm proteins SNRPD1, SNRPD2, SNRPE, SNRPF and SNRPG (5Sm) are trapped in an inactive 6S pICln-Sm complex by the chaperone CLNS1A that controls the assembly of the core snRNP. To assemble core snRNPs, the SMN complex accepts the trapped 5Sm proteins from CLNS1A. Binding of snRNA inside 5Sm ultimately triggers eviction of the SMN complex, thereby allowing binding of SNRPD3 and SNRPB to complete assembly of the core snRNP. Within the SMN complex, GEMIN2 constrains the conformation of 5Sm, thereby promoting 5Sm binding to snRNA containing the snRNP code (a nonameric Sm site and a 3'-adjacent stem-loop), thus preventing progression of assembly until a cognate substrate is bound. This Xenopus laevis (African clawed frog) protein is Gem-associated protein 2 (gemin2).